The chain runs to 361 residues: MALTLEALAARFGGEIVGDGRCEVGALAPLDQAGPRQLAFLANPKYLAQVETTGAGAVLIAPGDLEKLGAAAHGRNFIVTPNPYAYFARVAQMFIDLAAPPRAAGVHPSATIDPAAQVAASAVIGPHVTVEAGAVIGERAQLDANVFVGRGTRIGDDSHLYPNVAIYHGCTLGPRAIVHSGAVIGSDGFGFAPDFVGEGDARTGAWVKIPQVGGVKVGPDVEIGANTTIDRGAMADTVIDECVKIDNLVQIGHNCRIGAYTVIAGCAGIAGSTTIGKHCMIGGAVGIAGHVTLGDYVIVTAKSGVSKSLPKAGIYTSAFPAVEHGDWNRSAALVRNLDKLRDRIKALETALAAREGDAGGA.

Residue His-253 is the Proton acceptor of the active site.

Belongs to the transferase hexapeptide repeat family. LpxD subfamily. As to quaternary structure, homotrimer.

It carries out the reaction a UDP-3-O-[(3R)-3-hydroxyacyl]-alpha-D-glucosamine + a (3R)-hydroxyacyl-[ACP] = a UDP-2-N,3-O-bis[(3R)-3-hydroxyacyl]-alpha-D-glucosamine + holo-[ACP] + H(+). It participates in bacterial outer membrane biogenesis; LPS lipid A biosynthesis. Functionally, catalyzes the N-acylation of UDP-3-O-acylglucosamine using 3-hydroxyacyl-ACP as the acyl donor. Is involved in the biosynthesis of lipid A, a phosphorylated glycolipid that anchors the lipopolysaccharide to the outer membrane of the cell. The protein is UDP-3-O-acylglucosamine N-acyltransferase of Burkholderia pseudomallei (strain 668).